The primary structure comprises 295 residues: Protoheme IX farnesyltransferase (295 aa).

The next 9 helical transmembrane spans lie at 27-47 (LVVF…HPFL), 48-68 (ALIS…INMW), 94-114 (SALE…AIAV), 117-137 (ISAA…TIWL), 144-164 (NIVI…AVVT), 171-191 (SFIL…ALSL), 216-236 (KHIL…ALFL), 241-261 (FYLS…ISVI), and 272-292 (MFSY…FCSI).

This sequence belongs to the UbiA prenyltransferase family. Protoheme IX farnesyltransferase subfamily.

Its subcellular location is the cell membrane. The catalysed reaction is heme b + (2E,6E)-farnesyl diphosphate + H2O = Fe(II)-heme o + diphosphate. Its pathway is porphyrin-containing compound metabolism; heme O biosynthesis; heme O from protoheme: step 1/1. Functionally, converts heme B (protoheme IX) to heme O by substitution of the vinyl group on carbon 2 of heme B porphyrin ring with a hydroxyethyl farnesyl side group. The protein is Protoheme IX farnesyltransferase of Wolbachia pipientis subsp. Culex pipiens (strain wPip).